The chain runs to 190 residues: High affinity copper uptake protein 1 (190 aa).

The tract at residues Met-1 to Gly-35 is disordered. Topologically, residues Met-1–Leu-61 are extracellular. The short motif at His-5 to His-6 is the Bis-His motif element. The Methionine segments (Mets) motif motif lies at Met-7 to Met-12. A glycan (N-linked (GlcNAc...) asparagine) is linked at Asn-15. The span at Thr-26–Gly-35 shows a compositional bias: low complexity. Thr-27 carries an O-linked (GalNAc...) threonine glycan. Residues Val-62–Phe-82 form a helical membrane-spanning segment. The Cytoplasmic segment spans residues Tyr-83–His-132. Thr-114 carries the post-translational modification Phosphothreonine. The helical transmembrane segment at Leu-133–Phe-153 threads the bilayer. At Met-154–Tyr-156 the chain is on the extracellular side. Residues Asn-157 to Trp-177 traverse the membrane as a helical segment. At Lys-178–His-190 the chain is on the cytoplasmic side. Cys-189 is modified (cysteine sulfenic acid (-SOH)).

Belongs to the copper transporter (Ctr) (TC 1.A.56) family. SLC31A subfamily. In terms of assembly, homotrimer; is stabilized by cisplatin via interactions between cisplatin and the methionine-rich clusters, and could be crucial for the copper(2+) reduction process and copper(1+) stabilization. Heterotrimer between SLC31A1, CCS and SOD1; this heterotrimer is copper(1+)-mediated and its maintenance is regulated through SOD1 activation. Interacts with KDR; this interaction is induced upon VEGFA stimulation leading to SLC31A1 and KDR subsequent co-internalization to early endosomes, thereby activating KDR downstream signaling in endothelial cells. Interacts (via C-terminal domain) with ATOX1 (via dimer form); this interaction improves ATOX1 stability and controls intracellular copper(1+) levels. Interacts with SLC31A2; this interaction stabilizes SLC31A2 and protects its from ubiquitination and degradation. Interacts (via C-terminal domain) with CCS; this interaction is copper(1+)-mediated. Post-translationally, O-Glycosylation at Thr-27 protects from proteolytic cleavage in the N-terminal extracellular domain. Proteolytic cleavage, leading to a truncated form, is facilitated by SLC31A2 and initiated preferentially by CTSL and to a minor extend by CTSB in endolysosomal compartments. In vitro, is cleaved by CTSL/cathepsin L between residues 8 and 9 from the amino terminus. A post-CTSL/cathepsin L processing occurs to yield to the fully truncated form. In terms of processing, sulfenylated at Cys-189 after stimulation with VEGFA, which induces SLC31A1-KDR disulfide bond formation and their co-internalization to early endosomes, driving to a sustained VEGFR2 signaling.

It localises to the cell membrane. Its subcellular location is the early endosome membrane. It is found in the recycling endosome membrane. The protein localises to the apical cell membrane. The protein resides in the late endosome membrane. It localises to the basolateral cell membrane. It catalyses the reaction Ag(+)(out) = Ag(+)(in). It carries out the reaction Cu(+)(out) = Cu(+)(in). Its activity is regulated as follows. Copper(1+) transport is stimulated by extracellular acidic pH and high potassium ions concentrations. Copper(1+) import is regulated by a copper(1+)-dependent recycling of SLC31A1. Its function is as follows. Uniporter that mediates the transport of copper(1+) from the extracellular space to the cytoplasm, across the plasma membrane and delivers directly copper(1+) to specific chaperone such as ATOX1, via a copper(1+)- mediated transient interaction between the C-terminal domain and a copper(1+) chaperone, thus controlling intracellular copper(1+) levels. May function in copper(1+) import from the apical membrane thus may drive intestinal copper absorption. The copper(1+) transport mechanism is sodium-independent, saturable and of high-affinity. Also mediates the uptake of silver(1+). May function in the influx of the platinum-containing chemotherapeutic agents. The platinum-containing chemotherapeutic agents uptake is saturable. In vitro, mediates the transport of cadmium(2+) into cells. Also participates in the first step of copper(2+) acquisition by cells through a direct transfer of copper(2+) from copper(2+) carriers in blood, such as ALB to the N-terminal domain of SLC31A1, leading to copper(2+) reduction and probably followed by copper(1+) stabilization. In addition, functions as a redox sensor to promote angiogenesis in endothelial cells, in a copper(1+) transport independent manner, by transmitting the VEGF-induced ROS signal through a sulfenylation at Cys-189 leadin g to a subsequent disulfide bond formation between SLC31A1 and KDR. The SLC31A1-KDR complex is then co-internalized to early endosomes, driving a sustained VEGFR2 signaling. In terms of biological role, mobilizes copper(1+) out of the endosomal compartment, making copper(1+) available for export out of the cells. This chain is High affinity copper uptake protein 1, found in Homo sapiens (Human).